The chain runs to 428 residues: Diaminopimelate decarboxylase (428 aa).

Lys-64 carries the post-translational modification N6-(pyridoxal phosphate)lysine. Pyridoxal 5'-phosphate contacts are provided by residues Gly-239 and 281-284 (EPGR). Residues Arg-284, Arg-319, and Tyr-323 each coordinate substrate. Cys-350 serves as the catalytic Proton donor. Glu-351 and Tyr-379 together coordinate substrate. Residue Tyr-379 coordinates pyridoxal 5'-phosphate.

The protein belongs to the Orn/Lys/Arg decarboxylase class-II family. LysA subfamily. In terms of assembly, homodimer. Pyridoxal 5'-phosphate serves as cofactor.

The enzyme catalyses meso-2,6-diaminopimelate + H(+) = L-lysine + CO2. It participates in amino-acid biosynthesis; L-lysine biosynthesis via DAP pathway; L-lysine from DL-2,6-diaminopimelate: step 1/1. In terms of biological role, specifically catalyzes the decarboxylation of meso-diaminopimelate (meso-DAP) to L-lysine. The polypeptide is Diaminopimelate decarboxylase (Methanothermobacter thermautotrophicus (strain ATCC 29096 / DSM 1053 / JCM 10044 / NBRC 100330 / Delta H) (Methanobacterium thermoautotrophicum)).